Consider the following 438-residue polypeptide: Dol-P-Man:Man(5)GlcNAc(2)-PP-Dol alpha-1,3-mannosyltransferase (438 aa).

Ser13 bears the Phosphoserine mark. 11 helical membrane passes run 41 to 61, 95 to 115, 123 to 143, 149 to 169, 172 to 192, 203 to 223, 231 to 251, 289 to 309, 332 to 352, 356 to 376, and 407 to 427; these read YTLL…FWVI, TGPL…YYAT, MAQN…FLIY, VPPF…SIFV, LFND…LLAQ, LAVS…FLLL, ALPK…PFLL, FHLA…LCRW, PLTP…GICF, LHYQ…WAMP, and AALH…PQPF.

The protein belongs to the glycosyltransferase ALG3 family.

It is found in the endoplasmic reticulum membrane. The catalysed reaction is an alpha-D-Man-(1-&gt;2)-alpha-D-Man-(1-&gt;2)-alpha-D-Man-(1-&gt;3)-[alpha-D-Man-(1-&gt;6)]-beta-D-Man-(1-&gt;4)-beta-D-GlcNAc-(1-&gt;4)-alpha-D-GlcNAc-diphospho-di-trans,poly-cis-dolichol + a di-trans,poly-cis-dolichyl beta-D-mannosyl phosphate = an alpha-D-Man-(1-&gt;2)-alpha-D-Man-(1-&gt;2)-alpha-D-Man-(1-&gt;3)-[alpha-D-Man-(1-&gt;3)-alpha-D-Man-(1-&gt;6)]-beta-D-Man-(1-&gt;4)-beta-D-GlcNAc-(1-&gt;4)-alpha-D-GlcNAc-diphospho-di-trans,poly-cis-dolichol + a di-trans,poly-cis-dolichyl phosphate + H(+). The protein operates within protein modification; protein glycosylation. In terms of biological role, dol-P-Man:Man(5)GlcNAc(2)-PP-Dol alpha-1,3-mannosyltransferase that operates in the biosynthetic pathway of dolichol-linked oligosaccharides, the glycan precursors employed in protein asparagine (N)-glycosylation. The assembly of dolichol-linked oligosaccharides begins on the cytosolic side of the endoplasmic reticulum membrane and finishes in its lumen. The sequential addition of sugars to dolichol pyrophosphate produces dolichol-linked oligosaccharides containing fourteen sugars, including two GlcNAcs, nine mannoses and three glucoses. Once assembled, the oligosaccharide is transferred from the lipid to nascent proteins by oligosaccharyltransferases. In the lumen of the endoplasmic reticulum, adds the first dolichyl beta-D-mannosyl phosphate derived mannose in an alpha-1,3 linkage to Man(5)GlcNAc(2)-PP-dolichol to produce Man(6)GlcNAc(2)-PP-dolichol. Man(6)GlcNAc(2)-PP-dolichol is a substrate for ALG9, the following enzyme in the biosynthetic pathway. This Homo sapiens (Human) protein is Dol-P-Man:Man(5)GlcNAc(2)-PP-Dol alpha-1,3-mannosyltransferase.